The following is a 160-amino-acid chain: UPF0178 protein PLES_56411 (160 aa).

It belongs to the UPF0178 family.

The protein is UPF0178 protein PLES_56411 of Pseudomonas aeruginosa (strain LESB58).